Here is a 121-residue protein sequence, read N- to C-terminus: uncharacterized protein (121 aa).

The disordered stretch occupies residues 101–121; it reads TVVKKEDVRESPVDTFMENAT. The span at 102-112 shows a compositional bias: basic and acidic residues; that stretch reads VVKKEDVRESP.

This is an uncharacterized protein from Schizosaccharomyces pombe (strain 972 / ATCC 24843) (Fission yeast).